A 372-amino-acid polypeptide reads, in one-letter code: Ligninase A (372 aa).

Positions 1 to 21 are cleaved as a signal peptide; the sequence is MAFKQLVAAISLALSLTTANA. Positions 22–28 are excised as a propeptide; it reads AVVKEKR. 4 disulfides stabilise this stretch: Cys-31/Cys-43, Cys-42/Cys-313, Cys-62/Cys-148, and Cys-277/Cys-345. His-75 (proton acceptor) is an active-site residue. Positions 76, 94, 96, and 98 each coordinate Ca(2+). His-204 contributes to the heme b binding site. Positions 205, 222, 224, 227, and 229 each coordinate Ca(2+). Asn-285 is a glycosylation site (N-linked (GlcNAc...) asparagine).

This sequence belongs to the peroxidase family. Ligninase subfamily. The cofactor is heme b. Ca(2+) is required as a cofactor.

It carries out the reaction 1-(3,4-dimethoxyphenyl)-2-(2-methoxyphenoxy)propane-1,3-diol + H2O2 = 3,4-dimethoxybenzaldehyde + guaiacol + glycolaldehyde + H2O. It catalyses the reaction 2 (3,4-dimethoxyphenyl)methanol + H2O2 = 2 (3,4-dimethoxyphenyl)methanol radical + 2 H2O. The protein operates within secondary metabolite metabolism; lignin degradation. Depolymerization of lignin. Catalyzes the C(alpha)-C(beta) cleavage of the propyl side chains of lignin. This is Ligninase A (LIPA) from Phanerodontia chrysosporium (White-rot fungus).